The chain runs to 244 residues: 1-(5-phosphoribosyl)-5-[(5-phosphoribosylamino)methylideneamino] imidazole-4-carboxamide isomerase (244 aa).

Asp8 (proton acceptor) is an active-site residue. Asp129 functions as the Proton donor in the catalytic mechanism.

It belongs to the HisA/HisF family.

It localises to the cytoplasm. It carries out the reaction 1-(5-phospho-beta-D-ribosyl)-5-[(5-phospho-beta-D-ribosylamino)methylideneamino]imidazole-4-carboxamide = 5-[(5-phospho-1-deoxy-D-ribulos-1-ylimino)methylamino]-1-(5-phospho-beta-D-ribosyl)imidazole-4-carboxamide. Its pathway is amino-acid biosynthesis; L-histidine biosynthesis; L-histidine from 5-phospho-alpha-D-ribose 1-diphosphate: step 4/9. This Chelativorans sp. (strain BNC1) protein is 1-(5-phosphoribosyl)-5-[(5-phosphoribosylamino)methylideneamino] imidazole-4-carboxamide isomerase.